A 303-amino-acid chain; its full sequence is UDP-3-O-acyl-N-acetylglucosamine deacetylase (303 aa).

Zn(2+)-binding residues include His78, His237, and Asp241. The Proton donor role is filled by His264.

This sequence belongs to the LpxC family. Requires Zn(2+) as cofactor.

It carries out the reaction a UDP-3-O-[(3R)-3-hydroxyacyl]-N-acetyl-alpha-D-glucosamine + H2O = a UDP-3-O-[(3R)-3-hydroxyacyl]-alpha-D-glucosamine + acetate. The protein operates within glycolipid biosynthesis; lipid IV(A) biosynthesis; lipid IV(A) from (3R)-3-hydroxytetradecanoyl-[acyl-carrier-protein] and UDP-N-acetyl-alpha-D-glucosamine: step 2/6. In terms of biological role, catalyzes the hydrolysis of UDP-3-O-myristoyl-N-acetylglucosamine to form UDP-3-O-myristoylglucosamine and acetate, the committed step in lipid A biosynthesis. This is UDP-3-O-acyl-N-acetylglucosamine deacetylase from Coxiella burnetii (strain CbuK_Q154) (Coxiella burnetii (strain Q154)).